We begin with the raw amino-acid sequence, 948 residues long: FRIGIDA-like protein 5 (948 aa).

The stretch at 47–164 (DSTRSVLEER…VEKHRERIVA (118 aa)) forms a coiled coil. Disordered regions lie at residues 447–500 (ESAQ…APSQ), 518–538 (VKES…SGTE), and 804–894 (RNTS…YPSH). 2 stretches are compositionally biased toward basic and acidic residues: residues 459-475 (SYEK…KSEA) and 518-527 (VKESGADHQP). Residues 807–817 (SNGSGSGSASS) are compositionally biased toward low complexity. Positions 818–830 (KPDSTIKQSQTAK) are enriched in polar residues. The segment covering 861 to 872 (FSKKNKRGKKRS) has biased composition (basic residues). Residues 873 to 894 (MSGNNQSSGHIASHTSNHYPSH) are compositionally biased toward polar residues.

It belongs to the Frigida family. Expressed at low levels during seed development.

The sequence is that of FRIGIDA-like protein 5 (FRL5) from Arabidopsis thaliana (Mouse-ear cress).